A 380-amino-acid chain; its full sequence is Epoxyqueuosine reductase (380 aa).

D134 acts as the Proton donor in catalysis. Residues 179-208 enclose the 4Fe-4S ferredoxin-type 1 domain; that stretch reads PPDQPIEDQCGSCTKCIDICPTGALIQGGQ. [4Fe-4S] cluster is bound by residues C188, C191, C194, C198, C214, C240, C243, and C247. In terms of domain architecture, 4Fe-4S ferredoxin-type 2 spans 226-258; that stretch reads PEEYRDKIGNRIYGCDTCQTVCPKNKGMDFHNH.

Belongs to the QueG family. As to quaternary structure, monomer. Cob(II)alamin is required as a cofactor. Requires [4Fe-4S] cluster as cofactor.

It is found in the cytoplasm. The catalysed reaction is epoxyqueuosine(34) in tRNA + AH2 = queuosine(34) in tRNA + A + H2O. It participates in tRNA modification; tRNA-queuosine biosynthesis. In terms of biological role, catalyzes the conversion of epoxyqueuosine (oQ) to queuosine (Q), which is a hypermodified base found in the wobble positions of tRNA(Asp), tRNA(Asn), tRNA(His) and tRNA(Tyr). The protein is Epoxyqueuosine reductase of Bacillus anthracis.